Here is a 293-residue protein sequence, read N- to C-terminus: 4-hydroxy-tetrahydrodipicolinate synthase (293 aa).

Thr45 contacts pyruvate. Tyr133 serves as the catalytic Proton donor/acceptor. Lys161 (schiff-base intermediate with substrate) is an active-site residue. Ile204 is a pyruvate binding site.

This sequence belongs to the DapA family. As to quaternary structure, homotetramer; dimer of dimers.

It localises to the cytoplasm. It catalyses the reaction L-aspartate 4-semialdehyde + pyruvate = (2S,4S)-4-hydroxy-2,3,4,5-tetrahydrodipicolinate + H2O + H(+). It participates in amino-acid biosynthesis; L-lysine biosynthesis via DAP pathway; (S)-tetrahydrodipicolinate from L-aspartate: step 3/4. Catalyzes the condensation of (S)-aspartate-beta-semialdehyde [(S)-ASA] and pyruvate to 4-hydroxy-tetrahydrodipicolinate (HTPA). This Yersinia pseudotuberculosis serotype O:1b (strain IP 31758) protein is 4-hydroxy-tetrahydrodipicolinate synthase.